The following is a 433-amino-acid chain: 3-phosphoshikimate 1-carboxyvinyltransferase (433 aa).

Positions 21, 22, and 26 each coordinate 3-phosphoshikimate. Phosphoenolpyruvate is bound at residue Lys-21. Positions 96 and 124 each coordinate phosphoenolpyruvate. 3-phosphoshikimate-binding residues include Ser-167, Ser-168, Gln-169, Ser-195, Asp-310, and Lys-337. Gln-169 lines the phosphoenolpyruvate pocket. Catalysis depends on Asp-310, which acts as the Proton acceptor. 3 residues coordinate phosphoenolpyruvate: Arg-341, Arg-384, and Lys-410.

Belongs to the EPSP synthase family. In terms of assembly, monomer.

It is found in the cytoplasm. It carries out the reaction 3-phosphoshikimate + phosphoenolpyruvate = 5-O-(1-carboxyvinyl)-3-phosphoshikimate + phosphate. It functions in the pathway metabolic intermediate biosynthesis; chorismate biosynthesis; chorismate from D-erythrose 4-phosphate and phosphoenolpyruvate: step 6/7. Catalyzes the transfer of the enolpyruvyl moiety of phosphoenolpyruvate (PEP) to the 5-hydroxyl of shikimate-3-phosphate (S3P) to produce enolpyruvyl shikimate-3-phosphate and inorganic phosphate. The sequence is that of 3-phosphoshikimate 1-carboxyvinyltransferase from Clostridium botulinum (strain Alaska E43 / Type E3).